We begin with the raw amino-acid sequence, 140 residues long: Putative pre-16S rRNA nuclease (140 aa).

The protein belongs to the YqgF nuclease family.

Its subcellular location is the cytoplasm. Functionally, could be a nuclease involved in processing of the 5'-end of pre-16S rRNA. The protein is Putative pre-16S rRNA nuclease of Mannheimia succiniciproducens (strain KCTC 0769BP / MBEL55E).